Consider the following 428-residue polypeptide: UPF0229 protein YeaH (428 aa).

The segment covering 78–90 has biased composition (basic and acidic residues); that stretch reads GNDHFIQNDRIER. Residues 78-111 are disordered; it reads GNDHFIQNDRIERPQGGGGGGSGSGQGQASQDGE. Gly residues predominate over residues 92–103; it reads QGGGGGGSGSGQ.

It belongs to the UPF0229 family.

This is UPF0229 protein YeaH from Salmonella enteritidis PT4 (strain P125109).